Here is a 443-residue protein sequence, read N- to C-terminus: tRNA (guanine-N(7)-)-methyltransferase non-catalytic subunit TRM82 (443 aa).

The tract at residues 67–93 (ASKKLKTNDGEPVAQPKKQAKVPKPGP) is disordered. WD repeat units follow at residues 97–137 (PVYQ…KDNI), 193–235 (GHVS…IVDK), and 239–279 (GHEE…LLFK).

The protein belongs to the WD repeat TRM82 family. Forms a heterodimer with the catalytic subunit TRM8.

It is found in the nucleus. The protein operates within tRNA modification; N(7)-methylguanine-tRNA biosynthesis. Required for the formation of N(7)-methylguanine at position 46 (m7G46) in tRNA. In the complex, it is required to stabilize and induce conformational changes of the catalytic subunit. This is tRNA (guanine-N(7)-)-methyltransferase non-catalytic subunit TRM82 from Kluyveromyces lactis (strain ATCC 8585 / CBS 2359 / DSM 70799 / NBRC 1267 / NRRL Y-1140 / WM37) (Yeast).